The primary structure comprises 230 residues: Probable caffeoyl-CoA O-methyltransferase 1 (230 aa).

Residues Thr52, Asp74, 76–77 (GV), Ser82, Asp100, Ala129, Asp151, Asp153, and Tyr160 each bind S-adenosyl-L-methionine. Asp151 serves as a coordination point for a divalent metal cation. Asp177 and Asn178 together coordinate a divalent metal cation.

This sequence belongs to the class I-like SAM-binding methyltransferase superfamily. Cation-dependent O-methyltransferase family. CCoAMT subfamily.

The enzyme catalyses (E)-caffeoyl-CoA + S-adenosyl-L-methionine = (E)-feruloyl-CoA + S-adenosyl-L-homocysteine + H(+). The polypeptide is Probable caffeoyl-CoA O-methyltransferase 1 (omt5) (Dictyostelium discoideum (Social amoeba)).